Consider the following 115-residue polypeptide: NADH-ubiquinone oxidoreductase chain 3 (115 aa).

A run of 3 helical transmembrane segments spans residues M4–L24, F55–L75, and M84–Y104.

It belongs to the complex I subunit 3 family. Core subunit of respiratory chain NADH dehydrogenase (Complex I) which is composed of 45 different subunits. Interacts with TMEM186. Interacts with TMEM242.

It is found in the mitochondrion inner membrane. The enzyme catalyses a ubiquinone + NADH + 5 H(+)(in) = a ubiquinol + NAD(+) + 4 H(+)(out). Core subunit of the mitochondrial membrane respiratory chain NADH dehydrogenase (Complex I) which catalyzes electron transfer from NADH through the respiratory chain, using ubiquinone as an electron acceptor. Essential for the catalytic activity of complex I. The protein is NADH-ubiquinone oxidoreductase chain 3 of Reithrodon auritus (Bunny rat).